We begin with the raw amino-acid sequence, 383 residues long: MAGIPGLLFLLFLLLCAVGQVSPYSAPWKPTWPAYRLPVVLPQSTLSLAKPDFGAEAKLEVSSSCGPQCHKGTPLPTYEEAKQYLSYETLYANGSRTETQVGIYILSSSGGGAQHRDSGSSGKSRRKRQIYGYDSRFSIFGKDFLLNYPFSTSVKLSTGCTGTLVAEKHVLTAAHCIHDGKTYVKGTQKLRVGFLKPKFKDGGRGANDSTSAMPEKMKFQWIRVKRTHVPKGWIKGNANDIGMDYDYALLELKKPHKRKFMKIGVSPPAKQLPGGRIHFSGYDNDRPGNLVYRFCDVKDETYDLLYQQCDAQPGASGSGVYVRMWKRQQQKWERKIIGIFSGHQWVDMNGSPQDFNVAVRITPLKYAQICYWIKGNYLDCREG.

An N-terminal signal peptide occupies residues 1–19 (MAGIPGLLFLLFLLLCAVG). Asn93 carries N-linked (GlcNAc...) asparagine glycosylation. The tract at residues 108–127 (SSGGGAQHRDSGSSGKSRRK) is disordered. Phosphoserine; by FAM20C is present on Ser109. Cys160 and Cys176 are joined by a disulfide. Catalysis depends on His175, which acts as the Charge relay system. Residue Asn207 is glycosylated (N-linked (GlcNAc...) asparagine). Catalysis depends on charge relay system residues Asp240 and Ser316.

This sequence belongs to the peptidase S1 family.

It is found in the secreted. The sequence is that of Serine protease 23 (PRSS23) from Macaca mulatta (Rhesus macaque).